We begin with the raw amino-acid sequence, 260 residues long: MQGQNQQQAYDRGITIFSPDGRLYQVEYAREAVKRGTASIGVRTSDGVVLAVDKRIRSPLMERSSVEKIHKADDHIGIASAGHVADARQLIDFARRQAQVNQLRYGEPVGVETLTKEITDYIQQYTQVGGARPFGVALIIGGIVNGEPRLFETDPSGTPYEWKALAVGADRGDIRDYLEEHYDEGMDLDEGVDLALAALASVNDDELSPEGIGVATVDVETETFGQLTDEEKEAHLAEADLLDTGEDADDEAEDEDATEE.

Residues 237–260 (AEADLLDTGEDADDEAEDEDATEE) are disordered. Acidic residues predominate over residues 240-260 (DLLDTGEDADDEAEDEDATEE).

The protein belongs to the peptidase T1A family. In terms of assembly, the 20S proteasome core is composed of 14 alpha and 14 beta subunits that assemble into four stacked heptameric rings, resulting in a barrel-shaped structure. The two inner rings, each composed of seven catalytic beta subunits, are sandwiched by two outer rings, each composed of seven alpha subunits. The catalytic chamber with the active sites is on the inside of the barrel. Has a gated structure, the ends of the cylinder being occluded by the N-termini of the alpha-subunits. Is capped at one or both ends by the proteasome regulatory ATPase, PAN.

The protein localises to the cytoplasm. With respect to regulation, the formation of the proteasomal ATPase PAN-20S proteasome complex, via the docking of the C-termini of PAN into the intersubunit pockets in the alpha-rings, triggers opening of the gate for substrate entry. Interconversion between the open-gate and close-gate conformations leads to a dynamic regulation of the 20S proteasome proteolysis activity. Component of the proteasome core, a large protease complex with broad specificity involved in protein degradation. This chain is Proteasome subunit alpha 1, found in Haloarcula marismortui (strain ATCC 43049 / DSM 3752 / JCM 8966 / VKM B-1809) (Halobacterium marismortui).